We begin with the raw amino-acid sequence, 497 residues long: Probable malate:quinone oxidoreductase (497 aa).

This sequence belongs to the MQO family. FAD serves as cofactor.

The enzyme catalyses (S)-malate + a quinone = a quinol + oxaloacetate. It functions in the pathway carbohydrate metabolism; tricarboxylic acid cycle; oxaloacetate from (S)-malate (quinone route): step 1/1. This chain is Probable malate:quinone oxidoreductase, found in Exiguobacterium sibiricum (strain DSM 17290 / CCUG 55495 / CIP 109462 / JCM 13490 / 255-15).